A 159-amino-acid chain; its full sequence is Phosphopantetheine adenylyltransferase (159 aa).

Position 9 (Ser-9) interacts with substrate. Residues 9 to 10 (SF) and His-17 each bind ATP. Substrate contacts are provided by Lys-41, Ile-73, and Lys-87. ATP contacts are provided by residues 88-90 (GLR), Glu-98, and 122-128 (WGYVSSS).

It belongs to the bacterial CoaD family. In terms of assembly, homohexamer. Mg(2+) is required as a cofactor.

It localises to the cytoplasm. It carries out the reaction (R)-4'-phosphopantetheine + ATP + H(+) = 3'-dephospho-CoA + diphosphate. The protein operates within cofactor biosynthesis; coenzyme A biosynthesis; CoA from (R)-pantothenate: step 4/5. Functionally, reversibly transfers an adenylyl group from ATP to 4'-phosphopantetheine, yielding dephospho-CoA (dPCoA) and pyrophosphate. The polypeptide is Phosphopantetheine adenylyltransferase (Nocardioides sp. (strain ATCC BAA-499 / JS614)).